The primary structure comprises 85 residues: Granaticin polyketide synthase acyl carrier protein (85 aa).

Positions Arg3 to Gln81 constitute a Carrier domain. Ser41 is subject to O-(pantetheine 4'-phosphoryl)serine.

In terms of processing, 4'-phosphopantetheine is transferred from CoA to a specific serine of the apo-ACP-like protein.

It functions in the pathway antibiotic biosynthesis; granaticin biosynthesis. Functionally, acyl carrier protein. This is Granaticin polyketide synthase acyl carrier protein from Streptomyces violaceoruber.